Reading from the N-terminus, the 1686-residue chain is Thrombospondin type-1 domain-containing protein 7A (1686 aa).

The N-terminal stretch at 1-36 (MGLASRAPGKGGTSAGALASLFRVALLFFGLWDVQT) is a signal peptide. Topologically, residues 37-1635 (QTVANTRPTY…FGPDGKLKTW (1599 aa)) are extracellular. TSP type-1 domains are found at residues 44-103 (PTYI…RVCD), 107-181 (ELYD…IPCP), and 183-236 (DCVV…GKCE). N-linked (GlcNAc...) asparagine glycosylation is present at N223. Positions 257–321 (IRQARDTGEA…EKKRMRDPET (65 aa)) are disordered. Basic and acidic residues-rich tracts occupy residues 259-272 (QARDTGEARVPKAE) and 294-321 (EKKELRESKGERVRERVKEKKRMRDPET). TSP type-1 domains are found at residues 385-441 (DCEV…SPQG), 448-535 (VVYN…IPCP), 537-596 (ECEV…PSCY), 656-717 (DCVL…HPCT), 718-797 (VYHW…LPCK), 799-859 (DCVV…SVCP), 860-932 (GYRW…LPCQ), 934-985 (DCQL…QYCP), 988-1061 (KYNA…IPCP), 1063-1123 (DCKL…SDCS), 1124-1191 (QYVW…LPCP), 1193-1247 (DCVL…SNCF), 1248-1311 (HYSY…VECP), 1313-1368 (NCQL…KPCF), 1369-1439 (SWRY…VPCP), and 1441-1502 (ECYL…GQCY). Intrachain disulfides connect C460-C530, C480-C534, and C491-C519. The N-linked (GlcNAc...) asparagine glycan is linked to N475. N525 carries N-linked (GlcNAc...) asparagine glycosylation. 2 disulfides stabilise this stretch: C657–C699 and C668–C672. Residue N701 is glycosylated (N-linked (GlcNAc...) asparagine). Disulfide bonds link C711–C716, C729–C792, C756–C796, C767–C780, C800–C842, C811–C815, and C852–C858. Residue N739 is glycosylated (N-linked (GlcNAc...) asparagine). N-linked (GlcNAc...) asparagine glycosylation occurs at N996. 6 disulfide bridges follow: C1000/C1056, C1022/C1060, C1033/C1046, C1064/C1101, C1075/C1079, and C1118/C1122. N1071 is a glycosylation site (N-linked (GlcNAc...) asparagine). N-linked (GlcNAc...) asparagine glycosylation is present at N1212. Cysteines 1240 and 1246 form a disulfide. N-linked (GlcNAc...) asparagine glycosylation occurs at N1252. Intrachain disulfides connect C1259–C1306, C1267–C1310, C1278–C1291, C1314–C1352, C1325–C1329, C1362–C1367, C1378–C1434, C1385–C1438, C1396–C1415, C1442–C1486, C1453–C1457, and C1496–C1501. A glycan (N-linked (GlcNAc...) asparagine) is linked at N1303. N1393 carries N-linked (GlcNAc...) asparagine glycosylation. The N-linked (GlcNAc...) asparagine glycan is linked to N1527. A helical transmembrane segment spans residues 1636 to 1656 (VYGVAAGAFVLLVFIVSMTYL). Residues 1657–1686 (ACKKPKKPQRRQMNNRLKPLTLAYDGDADM) lie on the Cytoplasmic side of the membrane.

Extensively N-glycosylated.

It is found in the cell membrane. Its subcellular location is the cell projection. Required for normal sprouting angiogenesis and normal embryonic development of intersegmental vessels (ISV). Required for normal function of the glomerular filtration barrier. Required for normal axon outgrowth on embryonic motor neurons at the level of the horizontal myoseptum. Required for normal expression of notch1b, suggesting that its functions in angiogenesis and neuron outgrowth are due to decreased expression of notch1b. Plays a role in actin cytoskeleton rearrangement. This Danio rerio (Zebrafish) protein is Thrombospondin type-1 domain-containing protein 7A.